The following is a 389-amino-acid chain: Elongation factor Tu-3 (389 aa).

A tr-type G domain is found at 10 to 203 (KPHLNIGTMG…AVDTYVPMPE (194 aa)). The segment at 19–26 (GHVDHGKT) is G1. 19 to 26 (GHVDHGKT) provides a ligand contact to GTP. Mg(2+) is bound at residue threonine 26. The tract at residues 60–64 (GITIN) is G2. The interval 81–84 (DMPG) is G3. Residues 81–85 (DMPGH) and 136–139 (NKAD) each bind GTP. The segment at 136–139 (NKAD) is G4. Residues 173-175 (SGL) form a G5 region.

This sequence belongs to the TRAFAC class translation factor GTPase superfamily. Classic translation factor GTPase family. EF-Tu/EF-1A subfamily. In terms of assembly, monomer.

The protein resides in the cytoplasm. It catalyses the reaction GTP + H2O = GDP + phosphate + H(+). Functionally, GTP hydrolase that promotes the GTP-dependent binding of aminoacyl-tRNA to the A-site of ribosomes during protein biosynthesis. The polypeptide is Elongation factor Tu-3 (Streptomyces ramocissimus).